The following is a 380-amino-acid chain: Cytochrome b (380 aa).

4 helical membrane passes run 34-54, 78-99, 114-134, and 179-199; these read FGSL…LLAT, WLIR…YLHI, WNTG…GYVL, and FFAL…THLT. 2 residues coordinate heme b: H84 and H98. H183 and H197 together coordinate heme b. An a ubiquinone-binding site is contributed by H202. Transmembrane regions (helical) follow at residues 227-247, 289-309, 321-341, and 348-368; these read PKDL…ALFS, LGGV…PFLH, LSQL…WVGS, and FIII…ILFP.

Belongs to the cytochrome b family. The cytochrome bc1 complex contains 11 subunits: 3 respiratory subunits (MT-CYB, CYC1 and UQCRFS1), 2 core proteins (UQCRC1 and UQCRC2) and 6 low-molecular weight proteins (UQCRH/QCR6, UQCRB/QCR7, UQCRQ/QCR8, UQCR10/QCR9, UQCR11/QCR10 and a cleavage product of UQCRFS1). This cytochrome bc1 complex then forms a dimer. Heme b serves as cofactor.

It is found in the mitochondrion inner membrane. In terms of biological role, component of the ubiquinol-cytochrome c reductase complex (complex III or cytochrome b-c1 complex) that is part of the mitochondrial respiratory chain. The b-c1 complex mediates electron transfer from ubiquinol to cytochrome c. Contributes to the generation of a proton gradient across the mitochondrial membrane that is then used for ATP synthesis. This Todus todus (Jamaican tody) protein is Cytochrome b (MT-CYB).